The chain runs to 238 residues: Ribonuclease PH (238 aa).

Residues R86 and 124–126 contribute to the phosphate site; that span reads GTR.

Belongs to the RNase PH family. In terms of assembly, homohexameric ring arranged as a trimer of dimers.

The catalysed reaction is tRNA(n+1) + phosphate = tRNA(n) + a ribonucleoside 5'-diphosphate. In terms of biological role, phosphorolytic 3'-5' exoribonuclease that plays an important role in tRNA 3'-end maturation. Removes nucleotide residues following the 3'-CCA terminus of tRNAs; can also add nucleotides to the ends of RNA molecules by using nucleoside diphosphates as substrates, but this may not be physiologically important. Probably plays a role in initiation of 16S rRNA degradation (leading to ribosome degradation) during starvation. In Vibrio parahaemolyticus serotype O3:K6 (strain RIMD 2210633), this protein is Ribonuclease PH.